We begin with the raw amino-acid sequence, 212 residues long: Adenylate kinase (212 aa).

14 to 19 (GSGKGT) contributes to the ATP binding site. Positions 34 to 63 (STGDLFRKKISEDSQFAAQIQNYLSSGSYV) are NMP. Residues threonine 35, arginine 40, 61–63 (SYV), 89–92 (GYPR), and glutamine 96 each bind AMP. Residues 126–163 (QRLFCQKCQKSYNLLLAKPKNGLKCDLDNTDLITRNDD) form an LID region. Residue arginine 127 participates in ATP binding. The Zn(2+) site is built by cysteine 130 and cysteine 133. 136-137 (SY) serves as a coordination point for ATP. Zn(2+)-binding residues include cysteine 150 and aspartate 153. The AMP site is built by arginine 160 and arginine 171. Position 199 (glutamine 199) interacts with ATP.

The protein belongs to the adenylate kinase family. Monomer.

The protein resides in the cytoplasm. It catalyses the reaction AMP + ATP = 2 ADP. Its pathway is purine metabolism; AMP biosynthesis via salvage pathway; AMP from ADP: step 1/1. Its function is as follows. Catalyzes the reversible transfer of the terminal phosphate group between ATP and AMP. Plays an important role in cellular energy homeostasis and in adenine nucleotide metabolism. The protein is Adenylate kinase of Mesomycoplasma hyopneumoniae (strain 7448) (Mycoplasma hyopneumoniae).